We begin with the raw amino-acid sequence, 563 residues long: Cytochrome P450 monooxygenase efuG (563 aa).

Residues 10 to 30 (ITSHQWGIGSVFLLISIPLIV) form a helical membrane-spanning segment. The tract at residues 462–482 (PDDPQSGPRKDAKKQKAKSDG) is disordered. Residue Cys505 participates in heme binding.

This sequence belongs to the cytochrome P450 family. Heme is required as a cofactor.

The protein localises to the membrane. Its pathway is secondary metabolite biosynthesis; terpenoid biosynthesis. Functionally, cytochrome P450 monooxygenase; part of the gene cluster that mediates the biosynthesis of enfumafungin, a glycosylated fernene-type triterpenoid with potent antifungal activity, mediated by its interaction with beta-1,3-glucan synthase and the fungal cell wall. The pathway begins with the terpene cyclase-glycosyl transferase fusion protein that most likely uses 2,3-oxidosqualene as substrate and catalyzes glycosylation immediately after cyclization. The fernene glycoside then could be processed by the desaturase efuI which catalyzes isomerization of a double bond established by efuA to form the core structure. The latter would then undergo a series of hydroxylations in unknown order at C-2, C-19, C-23 and C-25, which would be catalyzed by two of the three cytochrome P450 monooxygenases efuB, efuG or efuH. The hydroxy-group at C-25 becomes oxidized by the dehydrogenase efuE to enable a spontaneous, non-enzymatic hemiacetal formation with C-23. After hydroxylation at C-2, acetylation by the acetyltransferase efuC takes place. The final steps in enfumafungin biosynthesis require expansion of the 5-membered ring by lactonization via a Baeyer-Villiger reaction mediated by one of the BGC's cytochrome P450 monooxygenases (efuB, efuG or efuH) followed by ring cleavage. This type of reaction would establish a double bond between C-20 and C-21 which could be reduced by the reductase efuL to form the final product. The polypeptide is Cytochrome P450 monooxygenase efuG (Hormonema carpetanum).